Consider the following 1021-residue polypeptide: Sodium/potassium-transporting ATPase subunit alpha-1 (1021 aa).

A propeptide spanning residues 1-5 (MGKGG) is cleaved from the precursor. Residues 1–11 (MGKGGGRDKYE) are compositionally biased toward basic and acidic residues. The disordered stretch occupies residues 1 to 37 (MGKGGGRDKYEPAAISEHGNKKKAKKERDMDELKKEV). Residues 6–85 (GRDKYEPAAI…NALTPPPTTP (80 aa)) are Cytoplasmic-facing. N6-acetyllysine is present on Lys9. Tyr10 is subject to Phosphotyrosine. Phosphoserine; by PKC is present on Ser16. N6-acetyllysine is present on Lys21. The segment covering 26–37 (KERDMDELKKEV) has biased composition (basic and acidic residues). Ser38 and Ser45 each carry phosphoserine. A phosphoinositide-3 kinase binding region spans residues 80–82 (PPP). A helical membrane pass occupies residues 86–106 (EWVKFCRQLFGGFSMLLWIGA). Residues 107–129 (ILCFLAYGIQAATEEEPQNDNLY) are Extracellular-facing. Residues 130–150 (LGVVLSAVVIITGCFSYYQEA) traverse the membrane as a helical segment. Topologically, residues 151-286 (KSSKIMESFK…GGQTPIAAEI (136 aa)) are cytoplasmic. Positions 214 to 233 (SSLTGESEPQTRSPDFTNEN) are disordered. At Ser226 the chain carries Phosphoserine. Tyr258 bears the Phosphotyrosine mark. A helical membrane pass occupies residues 287–306 (EHFIHIITGVAVFLGVTFFI). Residues 307–318 (LSLILEYTWLEA) are Extracellular-facing. A helical transmembrane segment spans residues 319-336 (VIFLIGIIVANVPEGLLA). At 337–770 (TVTVCLTLTA…EEGRLIFDNL (434 aa)) the chain is on the cytoplasmic side. Catalysis depends on Asp374, which acts as the 4-aspartylphosphate intermediate. 2 positions are modified to phosphoserine: Ser450 and Ser482. Lys485 contributes to the ATP binding site. Tyr540 carries the phosphotyrosine modification. Residues 594–715 (RAAVPDAVGK…QGAIVAVTGD (122 aa)) are mediates interaction with SCN7A. Residue Lys659 is modified to N6-succinyllysine. Residue Ser666 is modified to Phosphoserine. Mg(2+) is bound by residues Asp715 and Asp719. Residues 771 to 790 (KKSIAYTLTSNIPEITPFLI) traverse the membrane as a helical segment. The Extracellular segment spans residues 791 to 800 (FIIANIPLPL). The helical transmembrane segment at 801 to 821 (GTVTILCIDLGTDMVPAISLA) threads the bilayer. At 822-841 (YEQAESDIMKRQPRNPQTDK) the chain is on the cytoplasmic side. The helical transmembrane segment at 842–864 (LVNERLISMAYGQIGMIQALGGF) threads the bilayer. The Extracellular portion of the chain corresponds to 865-916 (FTYFVILAENGFLPIHLLGLRVDWDDRWVNDVEDSYGQQWTYEQRKIVEFTC). The helical transmembrane segment at 917 to 936 (HTAFFVSIVVVQWADLVICK) threads the bilayer. The Cytoplasmic segment spans residues 937 to 949 (TRRNSVFQQGMKN). Residue Ser941 is modified to Phosphoserine; by PKA. Residues 950-968 (KILIFGLFEETALAAFLSY) traverse the membrane as a helical segment. At 969–983 (CPGMGVALRMYPLKP) the chain is on the extracellular side. Residues 984–1004 (TWWFCAFPYSLLIFVYDEVRK) form a helical membrane-spanning segment. Over 1005 to 1021 (LIIRRRPGGWVEKETYY) the chain is Cytoplasmic.

It belongs to the cation transport ATPase (P-type) (TC 3.A.3) family. Type IIC subfamily. As to quaternary structure, the sodium/potassium-transporting ATPase is composed of a catalytic alpha subunit, an auxiliary non-catalytic beta subunit and an additional regulatory subunit. Interacts with regulatory subunit FXYD1. Interacts with regulatory subunit FXYD3. Interacts with SIK1. Interacts with SLC35G1 and STIM1. Interacts with CLN3; this interaction regulates the sodium/potassium-transporting ATPase complex localization at the plasma membrane. Interacts with SCN7A; activates ATP1A1 P-type sodium:potassium-exchanging transporter activity which indirectly signals to nearby neurons to regulate sodium homeostasis. Post-translationally, phosphorylation on Tyr-10 modulates pumping activity. Phosphorylation of Ser-941 by PKA modulates the response of ATP1A1 to PKC. Dephosphorylation by protein phosphatase 2A (PP2A) following increases in intracellular sodium, leading to increase catalytic activity.

It localises to the cell membrane. Its subcellular location is the basolateral cell membrane. The protein localises to the sarcolemma. It is found in the cell projection. The protein resides in the axon. It localises to the melanosome. The enzyme catalyses K(+)(out) + Na(+)(in) + ATP + H2O = K(+)(in) + Na(+)(out) + ADP + phosphate + H(+). Functionally, this is the catalytic component of the active enzyme, which catalyzes the hydrolysis of ATP coupled with the exchange of sodium and potassium ions across the plasma membrane. This action creates the electrochemical gradient of sodium and potassium ions, providing the energy for active transport of various nutrients. Could also be part of an osmosensory signaling pathway that senses body-fluid sodium levels and controls salt intake behavior as well as voluntary water intake to regulate sodium homeostasis. The polypeptide is Sodium/potassium-transporting ATPase subunit alpha-1 (ATP1A1) (Equus caballus (Horse)).